The following is an 84-amino-acid chain: Neurotoxin BmK-M11 (84 aa).

An N-terminal signal peptide occupies residues Met-1 to Ser-19. The LCN-type CS-alpha/beta domain maps to Arg-21–His-83. Intrachain disulfides connect Cys-31–Cys-82, Cys-35–Cys-55, Cys-41–Cys-65, and Cys-45–Cys-67. Position 84 (Arg-84) is a propeptide, removed by a carboxypeptidase.

This sequence belongs to the long (4 C-C) scorpion toxin superfamily. Sodium channel inhibitor family. Alpha subfamily. As to expression, expressed by the venom gland.

It localises to the secreted. Its function is as follows. Alpha toxins bind voltage-independently at site-3 of sodium channels (Nav) and inhibit the inactivation of the activated channels, thereby blocking neuronal transmission. This recombinant toxin selectively inhibits the fast inactivation of mNav1.4/SCN4A (EC(50)=82.3 nM) (tested in HEK293 cells). The polypeptide is Neurotoxin BmK-M11 (Olivierus martensii (Manchurian scorpion)).